Here is a 347-residue protein sequence, read N- to C-terminus: Putative phosphoesterase 078R (347 aa).

Aspartate 52, asparagine 87, and histidine 211 together coordinate a divalent metal cation.

The protein belongs to the metallophosphoesterase superfamily. IIV-6 244L family.

The sequence is that of Putative phosphoesterase 078R from Invertebrate iridescent virus 3 (IIV-3).